Consider the following 133-residue polypeptide: Small ribosomal subunit protein uS11 (133 aa).

A disordered region spans residues 1 to 22 (MPPKTRGAVRKPRKKDKKNIAL). The segment covering 7–17 (GAVRKPRKKDK) has biased composition (basic residues).

It belongs to the universal ribosomal protein uS11 family. As to quaternary structure, part of the 30S ribosomal subunit. Interacts with proteins S7 and S18. Binds to IF-3.

In terms of biological role, located on the platform of the 30S subunit, it bridges several disparate RNA helices of the 16S rRNA. Forms part of the Shine-Dalgarno cleft in the 70S ribosome. The polypeptide is Small ribosomal subunit protein uS11 (Renibacterium salmoninarum (strain ATCC 33209 / DSM 20767 / JCM 11484 / NBRC 15589 / NCIMB 2235)).